A 397-amino-acid polypeptide reads, in one-letter code: MDFLAKSINQFALEFSKKLAESAEGKNIFFSPWGISASLAMVYLGTKGTTAAQMAQVLQFSRDQDSKFCPDSEKKRKMEFNVGKPEEIYSDFQTLISEINSSSHACILKTANRIYGEKTFPFHKKYLEDVKTYFGAEPQSVNFIGASDQIRKEINSWVEKQTEGKILNLLPDDAVDPTTRMVLVNALYFKGVWEHQFLVQNTTEKSFKINKTTSKPVQMMSMKEKLQVFYIESPQAMGLQLYYESRDLSLLILLPEDVDGLDQLEKTITYEKLSEWTSADMMELCNVQLNLPKFKLEETYDLKSTLSSMGMSDAFNQSKADFSGMSSERNLFLSNVFHKCFVEINEQGTEAAAGTGSEVSVRMKLPSIEFNADHPFLFFIRHNKTNGILFYGRFCSP.

The Nuclear localization signal motif lies at 74 to 77 (KKRK).

Belongs to the serpin family. Ov-serpin subfamily.

It is found in the nucleus. It localises to the cytoplasm. Functionally, protease inhibitor that may play a role in the regulation of protease activities during hematopoiesis and apoptosis induced by TNF. May regulate protease activities in the cytoplasm and in the nucleus. The polypeptide is Serpin B10 (SERPINB10) (Bos taurus (Bovine)).